The chain runs to 822 residues: Myosin-D (822 aa).

The region spanning 95-770 (LTYGDIGGLP…AAKMLVRLQR (676 aa)) is the Myosin motor domain. ATP is bound at residue 189-196 (GESGAGKT). The actin-binding stretch occupies residues 660-670 (SHFIRCIKPND). A tail region spans residues 772-822 (ALSAWEPLVGVFEGMTVLKRAKQLSTGRAVPATRICANVRRKLVQAGIKVC).

Belongs to the TRAFAC class myosin-kinesin ATPase superfamily. Myosin family.

It localises to the cell membrane. The protein localises to the cytoplasm. In terms of biological role, myosins are actin-based motor molecules with ATPase activity. Unconventional myosins serve in intracellular movements. Their highly divergent tails are presumed to bind to membranous compartments, which would be moved relative to actin filaments. The sequence is that of Myosin-D from Toxoplasma gondii.